We begin with the raw amino-acid sequence, 897 residues long: Transportin-2 (897 aa).

20 HEAT repeats span residues 9–36 (GLQQVLQLLKDSQSPNTATQRIVQDKLK), 41–79 (FPDFNNYLIFVLTRLKSEDEPTRSLSGLILKNNVKAHYQ), 88–121 (FIKQECLNNIGDASSLIRATIGILITTIASKGEL), 127–164 (LLPQLCNLLNSEDYNTCEGAFGALQKICEDSSELLDSD), 171–201 (NIMIPKFLQFFKHCSPKIRSHAIACVNQFIM), 214–241 (FIEHLFALAVDDDPEVRKNVCRALVMLL), 253–280 (HSIIQYMLQRTQDHDENVALEACEFWLT), 296–386 (VQLI…LANV), 394–422 (HLLPLLKGLLFHPEWVVKESGILVLGAIA), 434–461 (PELIPHLIQCLSDKKALVRSIACWTLSR), 475–508 (LKPLMTELLKRILDGNKRVQEAACSAFATLEEEA), 516–549 (LSYILDTLVFAFGKYQHKNLLILYDAIGTLADSV), 557–595 (EYIQKLMPPLIQKWNELKDEDKDLFPLLECLSSVATALQ), 603–654 (EPVY…GLGG), 665–696 (IMTLLFQCMQDSMPEVRQSSFALLGDLTKACF), 704–737 (AEFMPILGTNLNPEFISVCNNATWAIGEICMQMG), 745–790 (QMVL…YVCP), 798–831 (QQFIRPWCTSLRNIRDNEEKDSAFRGICMMIGVN), 840–871 (IFFCDAVASWVSPKDDLRDMFYKILHGFKDQV), and 874–894 (DNWQQFSEQFPPLLKERLAAF). The 69-residue stretch at 31-99 (VQDKLKQLNQ…KQECLNNIGD (69 aa)) folds into the Importin N-terminal domain. The interval 325 to 364 (AVPDSEQDIKPRFHKSRTVTLPHEAERPDGSEDAEDDDDD) is disordered. Over residues 355–364 (SEDAEDDDDD) the composition is skewed to acidic residues. Lys-862 carries the post-translational modification N6-acetyllysine.

This sequence belongs to the importin beta family. Importin beta-2 subfamily.

Its subcellular location is the cytoplasm. The protein resides in the nucleus. Probably functions in nuclear protein import as nuclear transport receptor. Serves as receptor for nuclear localization signals (NLS) in cargo substrates. Is thought to mediate docking of the importin/substrate complex to the nuclear pore complex (NPC) through binding to nucleoporin and the complex is subsequently translocated through the pore by an energy requiring, Ran-dependent mechanism. At the nucleoplasmic side of the NPC, Ran binds to the importin, the importin/substrate complex dissociates and importin is re-exported from the nucleus to the cytoplasm where GTP hydrolysis releases Ran. The directionality of nuclear import is thought to be conferred by an asymmetric distribution of the GTP- and GDP-bound forms of Ran between the cytoplasm and nucleus. The chain is Transportin-2 (TNPO2) from Homo sapiens (Human).